We begin with the raw amino-acid sequence, 495 residues long: Aspartyl/glutamyl-tRNA(Asn/Gln) amidotransferase subunit B (495 aa).

It belongs to the GatB/GatE family. GatB subfamily. Heterotrimer of A, B and C subunits.

The catalysed reaction is L-glutamyl-tRNA(Gln) + L-glutamine + ATP + H2O = L-glutaminyl-tRNA(Gln) + L-glutamate + ADP + phosphate + H(+). The enzyme catalyses L-aspartyl-tRNA(Asn) + L-glutamine + ATP + H2O = L-asparaginyl-tRNA(Asn) + L-glutamate + ADP + phosphate + 2 H(+). In terms of biological role, allows the formation of correctly charged Asn-tRNA(Asn) or Gln-tRNA(Gln) through the transamidation of misacylated Asp-tRNA(Asn) or Glu-tRNA(Gln) in organisms which lack either or both of asparaginyl-tRNA or glutaminyl-tRNA synthetases. The reaction takes place in the presence of glutamine and ATP through an activated phospho-Asp-tRNA(Asn) or phospho-Glu-tRNA(Gln). In Methylocella silvestris (strain DSM 15510 / CIP 108128 / LMG 27833 / NCIMB 13906 / BL2), this protein is Aspartyl/glutamyl-tRNA(Asn/Gln) amidotransferase subunit B.